We begin with the raw amino-acid sequence, 150 residues long: D-aminoacyl-tRNA deacylase (150 aa).

A Gly-cisPro motif, important for rejection of L-amino acids motif is present at residues G140–P141.

It belongs to the DTD family. In terms of assembly, homodimer.

It localises to the cytoplasm. It catalyses the reaction glycyl-tRNA(Ala) + H2O = tRNA(Ala) + glycine + H(+). The enzyme catalyses a D-aminoacyl-tRNA + H2O = a tRNA + a D-alpha-amino acid + H(+). An aminoacyl-tRNA editing enzyme that deacylates mischarged D-aminoacyl-tRNAs. Also deacylates mischarged glycyl-tRNA(Ala), protecting cells against glycine mischarging by AlaRS. Acts via tRNA-based rather than protein-based catalysis; rejects L-amino acids rather than detecting D-amino acids in the active site. By recycling D-aminoacyl-tRNA to D-amino acids and free tRNA molecules, this enzyme counteracts the toxicity associated with the formation of D-aminoacyl-tRNA entities in vivo and helps enforce protein L-homochirality. The polypeptide is D-aminoacyl-tRNA deacylase (DTD1) (Kluyveromyces lactis (strain ATCC 8585 / CBS 2359 / DSM 70799 / NBRC 1267 / NRRL Y-1140 / WM37) (Yeast)).